The sequence spans 296 residues: GTPase Era (296 aa).

The Era-type G domain occupies Lys-3 to Glu-170. The segment at Gly-11–Ser-18 is G1. Gly-11–Ser-18 provides a ligand contact to GTP. The segment at Gln-37–Asn-41 is G2. Residues Asp-58 to Gly-61 are G3. Residues Asp-58 to Ile-62 and Asn-120 to Asp-123 each bind GTP. The segment at Asn-120 to Asp-123 is G4. A G5 region spans residues Ile-149–Ala-151. A KH type-2 domain is found at Leu-201 to Lys-278.

This sequence belongs to the TRAFAC class TrmE-Era-EngA-EngB-Septin-like GTPase superfamily. Era GTPase family. As to quaternary structure, monomer.

The protein localises to the cytoplasm. It is found in the cell membrane. In terms of biological role, an essential GTPase that binds both GDP and GTP, with rapid nucleotide exchange. Plays a role in 16S rRNA processing and 30S ribosomal subunit biogenesis and possibly also in cell cycle regulation and energy metabolism. The chain is GTPase Era from Clostridium perfringens (strain ATCC 13124 / DSM 756 / JCM 1290 / NCIMB 6125 / NCTC 8237 / Type A).